A 552-amino-acid polypeptide reads, in one-letter code: Hydroxylamine reductase (552 aa).

The [4Fe-4S] cluster site is built by cysteine 3, cysteine 6, cysteine 15, and cysteine 21. Residues histidine 247, glutamate 271, cysteine 315, cysteine 407, cysteine 435, cysteine 460, glutamate 495, and lysine 497 each contribute to the hybrid [4Fe-2O-2S] cluster site. Position 407 is a cysteine persulfide (cysteine 407).

The protein belongs to the HCP family. Requires [4Fe-4S] cluster as cofactor. Hybrid [4Fe-2O-2S] cluster serves as cofactor.

Its subcellular location is the cytoplasm. The catalysed reaction is A + NH4(+) + H2O = hydroxylamine + AH2 + H(+). In terms of biological role, catalyzes the reduction of hydroxylamine to form NH(3) and H(2)O. In Thermosipho melanesiensis (strain DSM 12029 / CIP 104789 / BI429), this protein is Hydroxylamine reductase.